Consider the following 431-residue polypeptide: Tol-Pal system protein TolB (431 aa).

Positions 1–26 (MSLMTKLGFRALVASCLIAAGGAANA) are cleaved as a signal peptide. A disordered region spans residues 411-431 (PQILSVQGGSVREPSWGPFMQ).

It belongs to the TolB family. In terms of assembly, the Tol-Pal system is composed of five core proteins: the inner membrane proteins TolA, TolQ and TolR, the periplasmic protein TolB and the outer membrane protein Pal. They form a network linking the inner and outer membranes and the peptidoglycan layer.

The protein resides in the periplasm. Functionally, part of the Tol-Pal system, which plays a role in outer membrane invagination during cell division and is important for maintaining outer membrane integrity. The chain is Tol-Pal system protein TolB from Burkholderia vietnamiensis (strain G4 / LMG 22486) (Burkholderia cepacia (strain R1808)).